Here is a 106-residue protein sequence, read N- to C-terminus: Small ribosomal subunit protein uS10 (106 aa).

It belongs to the universal ribosomal protein uS10 family. In terms of assembly, part of the 30S ribosomal subunit.

Its function is as follows. Involved in the binding of tRNA to the ribosomes. The protein is Small ribosomal subunit protein uS10 of Caldicellulosiruptor bescii (strain ATCC BAA-1888 / DSM 6725 / KCTC 15123 / Z-1320) (Anaerocellum thermophilum).